The sequence spans 285 residues: Bifunctional protein FolD (285 aa).

Residues 165–167 (GRS), S190, and I231 each bind NADP(+).

It belongs to the tetrahydrofolate dehydrogenase/cyclohydrolase family. Homodimer.

The enzyme catalyses (6R)-5,10-methylene-5,6,7,8-tetrahydrofolate + NADP(+) = (6R)-5,10-methenyltetrahydrofolate + NADPH. It carries out the reaction (6R)-5,10-methenyltetrahydrofolate + H2O = (6R)-10-formyltetrahydrofolate + H(+). Its pathway is one-carbon metabolism; tetrahydrofolate interconversion. Its function is as follows. Catalyzes the oxidation of 5,10-methylenetetrahydrofolate to 5,10-methenyltetrahydrofolate and then the hydrolysis of 5,10-methenyltetrahydrofolate to 10-formyltetrahydrofolate. The protein is Bifunctional protein FolD of Verminephrobacter eiseniae (strain EF01-2).